The following is a 173-amino-acid chain: Crossover junction endodeoxyribonuclease RuvC (173 aa).

Residues D8, E67, and D139 contribute to the active site. Positions 8, 67, and 139 each coordinate Mg(2+).

The protein belongs to the RuvC family. Homodimer which binds Holliday junction (HJ) DNA. The HJ becomes 2-fold symmetrical on binding to RuvC with unstacked arms; it has a different conformation from HJ DNA in complex with RuvA. In the full resolvosome a probable DNA-RuvA(4)-RuvB(12)-RuvC(2) complex forms which resolves the HJ. Requires Mg(2+) as cofactor.

It is found in the cytoplasm. It catalyses the reaction Endonucleolytic cleavage at a junction such as a reciprocal single-stranded crossover between two homologous DNA duplexes (Holliday junction).. Its function is as follows. The RuvA-RuvB-RuvC complex processes Holliday junction (HJ) DNA during genetic recombination and DNA repair. Endonuclease that resolves HJ intermediates. Cleaves cruciform DNA by making single-stranded nicks across the HJ at symmetrical positions within the homologous arms, yielding a 5'-phosphate and a 3'-hydroxyl group; requires a central core of homology in the junction. The consensus cleavage sequence is 5'-(A/T)TT(C/G)-3'. Cleavage occurs on the 3'-side of the TT dinucleotide at the point of strand exchange. HJ branch migration catalyzed by RuvA-RuvB allows RuvC to scan DNA until it finds its consensus sequence, where it cleaves and resolves the cruciform DNA. This is Crossover junction endodeoxyribonuclease RuvC from Yersinia enterocolitica serotype O:8 / biotype 1B (strain NCTC 13174 / 8081).